We begin with the raw amino-acid sequence, 367 residues long: Protein-glutamate methylesterase/protein-glutamine glutaminase 2 (367 aa).

Positions R15–E132 constitute a Response regulatory domain. A 4-aspartylphosphate modification is found at D66. Residues K172–R367 form the CheB-type methylesterase domain. Catalysis depends on residues S184, H211, and D311.

It belongs to the CheB family. In terms of processing, phosphorylated by CheA. Phosphorylation of the N-terminal regulatory domain activates the methylesterase activity.

The protein localises to the cytoplasm. The enzyme catalyses [protein]-L-glutamate 5-O-methyl ester + H2O = L-glutamyl-[protein] + methanol + H(+). The catalysed reaction is L-glutaminyl-[protein] + H2O = L-glutamyl-[protein] + NH4(+). Its function is as follows. Involved in chemotaxis. Part of a chemotaxis signal transduction system that modulates chemotaxis in response to various stimuli. Catalyzes the demethylation of specific methylglutamate residues introduced into the chemoreceptors (methyl-accepting chemotaxis proteins or MCP) by CheR. Also mediates the irreversible deamidation of specific glutamine residues to glutamic acid. The polypeptide is Protein-glutamate methylesterase/protein-glutamine glutaminase 2 (Methanosarcina mazei (strain ATCC BAA-159 / DSM 3647 / Goe1 / Go1 / JCM 11833 / OCM 88) (Methanosarcina frisia)).